The chain runs to 320 residues: Ferrochelatase (320 aa).

The Fe cation site is built by His194 and Glu275.

It belongs to the ferrochelatase family. As to quaternary structure, monomer.

It is found in the cytoplasm. The catalysed reaction is heme b + 2 H(+) = protoporphyrin IX + Fe(2+). Its pathway is porphyrin-containing compound metabolism; protoheme biosynthesis; protoheme from protoporphyrin-IX: step 1/1. Its function is as follows. Catalyzes the ferrous insertion into protoporphyrin IX. This is Ferrochelatase from Escherichia coli (strain SMS-3-5 / SECEC).